A 399-amino-acid chain; its full sequence is Phosphoglycerate kinase (399 aa).

Substrate-binding positions include 22 to 24, Arg-37, 60 to 63, Arg-119, and Arg-152; these read DLN and HFGR. ATP-binding positions include Lys-202, Glu-324, and 354–357; that span reads GGDT.

It belongs to the phosphoglycerate kinase family. Monomer.

The protein localises to the cytoplasm. The enzyme catalyses (2R)-3-phosphoglycerate + ATP = (2R)-3-phospho-glyceroyl phosphate + ADP. It participates in carbohydrate degradation; glycolysis; pyruvate from D-glyceraldehyde 3-phosphate: step 2/5. The sequence is that of Phosphoglycerate kinase from Rhizobium meliloti (strain 1021) (Ensifer meliloti).